The sequence spans 424 residues: D-inositol 3-phosphate glycosyltransferase (424 aa).

Residue H9 participates in 1D-myo-inositol 3-phosphate binding. Residues 15–16 (QP) and G23 contribute to the UDP-N-acetyl-alpha-D-glucosamine site. 1D-myo-inositol 3-phosphate is bound by residues 20 to 25 (DSGGMN), K78, Y110, T134, and R154. Residues R231, K236, and R294 each coordinate UDP-N-acetyl-alpha-D-glucosamine. Residues Y303, R304, and A306 each coordinate Mg(2+). 2 residues coordinate UDP-N-acetyl-alpha-D-glucosamine: E316 and E324. Residue T330 participates in Mg(2+) binding.

The protein belongs to the glycosyltransferase group 1 family. MshA subfamily. Homodimer.

The enzyme catalyses 1D-myo-inositol 3-phosphate + UDP-N-acetyl-alpha-D-glucosamine = 1D-myo-inositol 2-acetamido-2-deoxy-alpha-D-glucopyranoside 3-phosphate + UDP + H(+). Functionally, catalyzes the transfer of a N-acetyl-glucosamine moiety to 1D-myo-inositol 3-phosphate to produce 1D-myo-inositol 2-acetamido-2-deoxy-glucopyranoside 3-phosphate in the mycothiol biosynthesis pathway. This is D-inositol 3-phosphate glycosyltransferase from Corynebacterium efficiens (strain DSM 44549 / YS-314 / AJ 12310 / JCM 11189 / NBRC 100395).